Here is a 523-residue protein sequence, read N- to C-terminus: GMP synthase [glutamine-hydrolyzing] (523 aa).

A Glutamine amidotransferase type-1 domain is found at 9 to 198; that stretch reads PVLVVDFGAQ…LTEIAGLEQN (190 aa). The active-site Nucleophile is the cysteine 86. Catalysis depends on residues histidine 172 and glutamate 174. The GMPS ATP-PPase domain occupies 199-397; it reads WTAANIAEEL…LGLPEEIVGR (199 aa). Residue 227–233 coordinates ATP; sequence SGGVDSA.

In terms of assembly, homodimer.

The enzyme catalyses XMP + L-glutamine + ATP + H2O = GMP + L-glutamate + AMP + diphosphate + 2 H(+). Its pathway is purine metabolism; GMP biosynthesis; GMP from XMP (L-Gln route): step 1/1. Catalyzes the synthesis of GMP from XMP. The protein is GMP synthase [glutamine-hydrolyzing] of Corynebacterium glutamicum (strain ATCC 13032 / DSM 20300 / JCM 1318 / BCRC 11384 / CCUG 27702 / LMG 3730 / NBRC 12168 / NCIMB 10025 / NRRL B-2784 / 534).